A 214-amino-acid polypeptide reads, in one-letter code: uncharacterized protein (214 aa).

4 helical membrane-spanning segments follow: residues 10–30, 55–75, 147–167, and 174–194; these read IPPLAVYLLVSGVVGVESLGI, IGVGVVAVIGAAVGDSIGYAI, VSGAICWAGGTTALVYFAGMA, and RFSWIALIITVVVGIIAAILL.

The protein belongs to the DedA family.

It is found in the cell membrane. This is an uncharacterized protein from Mycobacterium leprae (strain TN).